The following is a 97-amino-acid chain: Small cell adhesion glycoprotein (97 aa).

Residues 1 to 36 (MNNLPATPSPEELMTTPVFQAPETLSPQAEEASTAL) are Extracellular-facing. Thr7 is a glycosylation site (O-linked (GalNAc...) threonine). O-linked (GalNAc...) serine glycosylation occurs at Ser9. Residues Thr15, Thr16, and Thr24 are each glycosylated (O-linked (GalNAc...) threonine). Residue Ser26 is glycosylated (O-linked (GalNAc...) serine). Residues 37–57 (IAVVITVVFLTLLSVVTLIFF) form a helical; Signal-anchor for type III membrane protein membrane-spanning segment. At 58–97 (HLYKNKGSYVTYEPAEGEPSAILQMETDSAKGREKEEYFI) the chain is on the cytoplasmic side.

This sequence belongs to the SMAGP family. O-glycosylated. The O-glycan is modified with sialic acid residues.

Its subcellular location is the cell membrane. The protein localises to the cytoplasmic vesicle membrane. Its function is as follows. May play a role in epithelial cell-cell contacts. May play a role in tumor invasiveness and metastasis formation. This is Small cell adhesion glycoprotein (Smagp) from Mus musculus (Mouse).